A 616-amino-acid chain; its full sequence is Dihydroxy-acid dehydratase (616 aa).

Mg(2+) is bound at residue D81. C122 serves as a coordination point for [2Fe-2S] cluster. Residues D123 and K124 each contribute to the Mg(2+) site. Residue K124 is modified to N6-carboxylysine. C195 serves as a coordination point for [2Fe-2S] cluster. E491 contributes to the Mg(2+) binding site. The active-site Proton acceptor is S517.

It belongs to the IlvD/Edd family. Homodimer. The cofactor is [2Fe-2S] cluster. It depends on Mg(2+) as a cofactor.

The enzyme catalyses (2R)-2,3-dihydroxy-3-methylbutanoate = 3-methyl-2-oxobutanoate + H2O. It carries out the reaction (2R,3R)-2,3-dihydroxy-3-methylpentanoate = (S)-3-methyl-2-oxopentanoate + H2O. It participates in amino-acid biosynthesis; L-isoleucine biosynthesis; L-isoleucine from 2-oxobutanoate: step 3/4. Its pathway is amino-acid biosynthesis; L-valine biosynthesis; L-valine from pyruvate: step 3/4. Functionally, functions in the biosynthesis of branched-chain amino acids. Catalyzes the dehydration of (2R,3R)-2,3-dihydroxy-3-methylpentanoate (2,3-dihydroxy-3-methylvalerate) into 2-oxo-3-methylpentanoate (2-oxo-3-methylvalerate) and of (2R)-2,3-dihydroxy-3-methylbutanoate (2,3-dihydroxyisovalerate) into 2-oxo-3-methylbutanoate (2-oxoisovalerate), the penultimate precursor to L-isoleucine and L-valine, respectively. The polypeptide is Dihydroxy-acid dehydratase (Shigella boydii serotype 4 (strain Sb227)).